The primary structure comprises 262 residues: Cytochrome c oxidase subunit 3 (262 aa).

6 helical membrane-spanning segments follow: residues 39–59, 83–103, 120–140, 163–183, 201–221, and 240–260; these read YDISLFLLGNIITILTVYQWW, GMILFILSEVLFFVSFFWAFF, MGIISFNPFQIPLLNTAILLA, GLFFTVLLGIYFTILQAYEYI, ATGFHGVHVLIGTTFLLVCLL, and AWYWHFVDVVWLFLYITIYWW.

This sequence belongs to the cytochrome c oxidase subunit 3 family. As to quaternary structure, component of the cytochrome c oxidase (complex IV, CIV), a multisubunit enzyme composed of a catalytic core of 3 subunits and several supernumerary subunits. The complex exists as a monomer or a dimer and forms supercomplexes (SCs) in the inner mitochondrial membrane with ubiquinol-cytochrome c oxidoreductase (cytochrome b-c1 complex, complex III, CIII).

It localises to the mitochondrion inner membrane. It catalyses the reaction 4 Fe(II)-[cytochrome c] + O2 + 8 H(+)(in) = 4 Fe(III)-[cytochrome c] + 2 H2O + 4 H(+)(out). Component of the cytochrome c oxidase, the last enzyme in the mitochondrial electron transport chain which drives oxidative phosphorylation. The respiratory chain contains 3 multisubunit complexes succinate dehydrogenase (complex II, CII), ubiquinol-cytochrome c oxidoreductase (cytochrome b-c1 complex, complex III, CIII) and cytochrome c oxidase (complex IV, CIV), that cooperate to transfer electrons derived from NADH and succinate to molecular oxygen, creating an electrochemical gradient over the inner membrane that drives transmembrane transport and the ATP synthase. Cytochrome c oxidase is the component of the respiratory chain that catalyzes the reduction of oxygen to water. Electrons originating from reduced cytochrome c in the intermembrane space (IMS) are transferred via the dinuclear copper A center (CU(A)) of subunit 2 and heme A of subunit 1 to the active site in subunit 1, a binuclear center (BNC) formed by heme A3 and copper B (CU(B)). The BNC reduces molecular oxygen to 2 water molecules using 4 electrons from cytochrome c in the IMS and 4 protons from the mitochondrial matrix. This Drosophila yakuba (Fruit fly) protein is Cytochrome c oxidase subunit 3 (mt:CoIII).